The primary structure comprises 164 residues: Crossover junction endodeoxyribonuclease RuvC (164 aa).

Catalysis depends on residues Asp-7, Glu-67, and Asp-139. Positions 7, 67, and 139 each coordinate Mg(2+).

Belongs to the RuvC family. As to quaternary structure, homodimer which binds Holliday junction (HJ) DNA. The HJ becomes 2-fold symmetrical on binding to RuvC with unstacked arms; it has a different conformation from HJ DNA in complex with RuvA. In the full resolvosome a probable DNA-RuvA(4)-RuvB(12)-RuvC(2) complex forms which resolves the HJ. Requires Mg(2+) as cofactor.

The protein localises to the cytoplasm. The catalysed reaction is Endonucleolytic cleavage at a junction such as a reciprocal single-stranded crossover between two homologous DNA duplexes (Holliday junction).. Its function is as follows. The RuvA-RuvB-RuvC complex processes Holliday junction (HJ) DNA during genetic recombination and DNA repair. Endonuclease that resolves HJ intermediates. Cleaves cruciform DNA by making single-stranded nicks across the HJ at symmetrical positions within the homologous arms, yielding a 5'-phosphate and a 3'-hydroxyl group; requires a central core of homology in the junction. The consensus cleavage sequence is 5'-(A/T)TT(C/G)-3'. Cleavage occurs on the 3'-side of the TT dinucleotide at the point of strand exchange. HJ branch migration catalyzed by RuvA-RuvB allows RuvC to scan DNA until it finds its consensus sequence, where it cleaves and resolves the cruciform DNA. This Citrifermentans bemidjiense (strain ATCC BAA-1014 / DSM 16622 / JCM 12645 / Bem) (Geobacter bemidjiensis) protein is Crossover junction endodeoxyribonuclease RuvC.